The primary structure comprises 104 residues: UPF0473 protein LGAS_0424 (104 aa).

This sequence belongs to the UPF0473 family.

This is UPF0473 protein LGAS_0424 from Lactobacillus gasseri (strain ATCC 33323 / DSM 20243 / BCRC 14619 / CIP 102991 / JCM 1131 / KCTC 3163 / NCIMB 11718 / NCTC 13722 / AM63).